A 242-amino-acid polypeptide reads, in one-letter code: Type III pantothenate kinase (242 aa).

Residue 5–12 participates in ATP binding; it reads DLGNTRLK. Substrate is bound by residues Tyr94 and 100–103; that span reads GCDR. The active-site Proton acceptor is the Asp102. Thr124 serves as a coordination point for ATP. Thr175 serves as a coordination point for substrate.

The protein belongs to the type III pantothenate kinase family. In terms of assembly, homodimer. It depends on NH4(+) as a cofactor. The cofactor is K(+).

It is found in the cytoplasm. The enzyme catalyses (R)-pantothenate + ATP = (R)-4'-phosphopantothenate + ADP + H(+). It functions in the pathway cofactor biosynthesis; coenzyme A biosynthesis; CoA from (R)-pantothenate: step 1/5. Functionally, catalyzes the phosphorylation of pantothenate (Pan), the first step in CoA biosynthesis. In Psychrobacter arcticus (strain DSM 17307 / VKM B-2377 / 273-4), this protein is Type III pantothenate kinase.